We begin with the raw amino-acid sequence, 75 residues long: Endogenous retrovirus group K member 10 Np9 protein (75 aa).

Residues 21–43 (PTAPKRQRPSRTGHDDDGGFVEK) form a disordered region. The segment covering 32 to 43 (TGHDDDGGFVEK) has biased composition (basic and acidic residues).

Its subcellular location is the nucleus. Functionally, may possess a function in tumorigenesis. In Homo sapiens (Human), this protein is Endogenous retrovirus group K member 10 Np9 protein (ERVK-10).